Here is a 274-residue protein sequence, read N- to C-terminus: 2,3,4,5-tetrahydropyridine-2,6-dicarboxylate N-succinyltransferase (274 aa).

Arginine 104 and aspartate 141 together coordinate substrate.

The protein belongs to the transferase hexapeptide repeat family. As to quaternary structure, homotrimer.

It localises to the cytoplasm. It catalyses the reaction (S)-2,3,4,5-tetrahydrodipicolinate + succinyl-CoA + H2O = (S)-2-succinylamino-6-oxoheptanedioate + CoA. Its pathway is amino-acid biosynthesis; L-lysine biosynthesis via DAP pathway; LL-2,6-diaminopimelate from (S)-tetrahydrodipicolinate (succinylase route): step 1/3. This is 2,3,4,5-tetrahydropyridine-2,6-dicarboxylate N-succinyltransferase from Wigglesworthia glossinidia brevipalpis.